Reading from the N-terminus, the 227-residue chain is Venom allergen 5.01 (227 aa).

The first 23 residues, 1–23 (MEIGGLVYLILIITIINLSFGET), serve as a signal peptide directing secretion. 4 disulfides stabilise this stretch: Cys27-Cys39, Cys31-Cys124, Cys49-Cys117, and Cys193-Cys210. Positions 68–212 (LKRHNDFRQN…WYTHYLVCNY (145 aa)) constitute an SCP domain.

Belongs to the CRISP family. Venom allergen 5-like subfamily. In terms of tissue distribution, expressed by the venom gland.

It is found in the secreted. This chain is Venom allergen 5.01, found in Dolichovespula maculata (Bald-faced hornet).